A 325-amino-acid chain; its full sequence is Ferrochelatase (325 aa).

2 residues coordinate Fe cation: H195 and E276.

It belongs to the ferrochelatase family.

It localises to the cytoplasm. The catalysed reaction is heme b + 2 H(+) = protoporphyrin IX + Fe(2+). Its pathway is porphyrin-containing compound metabolism; protoheme biosynthesis; protoheme from protoporphyrin-IX: step 1/1. Catalyzes the ferrous insertion into protoporphyrin IX. The sequence is that of Ferrochelatase from Methylococcus capsulatus (strain ATCC 33009 / NCIMB 11132 / Bath).